A 79-amino-acid polypeptide reads, in one-letter code: MDTKQAVLDILNELTGEDLSDQMDENIFENGLLDSMATVQMLLELQDKCGVTAPVSEFHREDWDTPNKIIAKVESLRNE.

Residues 1 to 77 (MDTKQAVLDI…KIIAKVESLR (77 aa)) enclose the Carrier domain. An O-(pantetheine 4'-phosphoryl)serine modification is found at Ser-35.

This sequence belongs to the DltC family. In terms of processing, 4'-phosphopantetheine is transferred from CoA to a specific serine of apo-DCP.

Its subcellular location is the cytoplasm. It participates in cell wall biogenesis; lipoteichoic acid biosynthesis. Its function is as follows. Carrier protein involved in the D-alanylation of lipoteichoic acid (LTA). The loading of thioester-linked D-alanine onto DltC is catalyzed by D-alanine--D-alanyl carrier protein ligase DltA. The DltC-carried D-alanyl group is further transferred to cell membrane phosphatidylglycerol (PG) by forming an ester bond, probably catalyzed by DltD. D-alanylation of LTA plays an important role in modulating the properties of the cell wall in Gram-positive bacteria, influencing the net charge of the cell wall. This is D-alanyl carrier protein from Lactobacillus gasseri (strain ATCC 33323 / DSM 20243 / BCRC 14619 / CIP 102991 / JCM 1131 / KCTC 3163 / NCIMB 11718 / NCTC 13722 / AM63).